A 587-amino-acid chain; its full sequence is Aspartate--tRNA ligase (587 aa).

L-aspartate is bound at residue Glu-174. Residues Gln-198 to Lys-201 form an aspartate region. Residue Arg-220 coordinates L-aspartate. ATP-binding positions include Arg-220–Glu-222 and Gln-229. Residue His-443 coordinates L-aspartate. An ATP-binding site is contributed by Glu-477. Arg-484 is a binding site for L-aspartate. ATP is bound at residue Gly-529 to Arg-532.

The protein belongs to the class-II aminoacyl-tRNA synthetase family. Type 1 subfamily. In terms of assembly, homodimer.

The protein localises to the cytoplasm. The catalysed reaction is tRNA(Asp) + L-aspartate + ATP = L-aspartyl-tRNA(Asp) + AMP + diphosphate. In terms of biological role, catalyzes the attachment of L-aspartate to tRNA(Asp) in a two-step reaction: L-aspartate is first activated by ATP to form Asp-AMP and then transferred to the acceptor end of tRNA(Asp). The sequence is that of Aspartate--tRNA ligase from Streptococcus pneumoniae (strain Taiwan19F-14).